Consider the following 147-residue polypeptide: uncharacterized protein (147 aa).

Residues 1–137 (MRDNTIGSLI…LYELMTKVHK (137 aa)) form the HTH marR-type domain. Positions 53–76 (QMELAEKVTVTQGGISRMLTRLEK) form a DNA-binding region, H-T-H motif.

This is an uncharacterized protein from Bacillus cereus (strain ATCC 14579 / DSM 31 / CCUG 7414 / JCM 2152 / NBRC 15305 / NCIMB 9373 / NCTC 2599 / NRRL B-3711).